Consider the following 2335-residue polypeptide: Pre-mRNA-processing-splicing factor 8 (2335 aa).

The residue at position 2 (Ala-2) is an N-acetylalanine. The reverse transcriptase homology domain stretch occupies residues 812–1303 (TTVHWLESRR…KIQTRIKIGL (492 aa)). 2 positions are modified to phosphoserine: Ser-859 and Ser-1358. The segment at 1304 to 1577 (NSKMPSRFPP…TLKISLIQIF (274 aa)) is linker. Lys-1425 is modified (N6,N6-dimethyllysine). Lys-1463 carries the N6-acetyllysine modification. Positions 1513-1526 (MKWKKLTNAQRSGL) are important for branch point selection. A restriction endonuclease homology domain region spans residues 1581-1752 (LWQKIHESIV…LRERIRKGLQ (172 aa)). The involved in interaction with pre-mRNA 5' splice site stretch occupies residues 1669–2034 (GDYDSHDIER…QIAEIEKQTK (366 aa)). Residues 1767–2020 (NYGELFSNQI…ILGMEISAPS (254 aa)) form an RNase H homology domain region. The region spanning 2103-2234 (TYILPKNVLK…LTAYKLTPSG (132 aa)) is the MPN domain. Residues 2301 to 2335 (PKEFYHEVHRPSHFLNFALLQEGEVYSADREDLYA) are required for interaction with EFTUD2 and SNRNP200.

As to quaternary structure, part of the U5 snRNP complex. Component of the U4/U6-U5 tri-snRNP complex composed of the U4, U6 and U5 snRNAs and at least PRPF3, PRPF4, PRPF6, PRPF8, PRPF31, SNRNP200, TXNL4A, SNRNP40, DDX23, CD2BP2, PPIH, SNU13, EFTUD2, SART1 and USP39. Component of the U5.U4atac/U6atac snRNP complexes in U12-dependent spliceosomes. Within the minor spliceosome, which acts on U12-type introns, interacts with PPIL2 and RBM48. Core component of U2-type precatalytic, catalytic and postcatalytic spliceosomal complexes. Found in a mRNA splicing-dependent exon junction complex (EJC) with SRRM1. Interacts with U5 snRNP proteins SNRP116 and SNRNP40. Interacts with EFTUD2. Interacts (via the MPN (JAB/Mov34) domain) with PRPF3 ('Lys-63'-linked polyubiquitinated); may stabilize the U4/U6-U5 tri-snRNP complex. Interacts (via RNase H homology domain) with AAR2. Interacts with RPAP3 and URI1 in a ZNHIT2-dependent manner. Interacts with C9orf78. Interacts with SNRNP200; the interaction is direct. Interacts with TSSC4; the interaction is direct. In terms of tissue distribution, widely expressed.

The protein localises to the nucleus. It localises to the nucleus speckle. Its function is as follows. Plays a role in pre-mRNA splicing as core component of precatalytic, catalytic and postcatalytic spliceosomal complexes, both of the predominant U2-type spliceosome and the minor U12-type spliceosome. Functions as a scaffold that mediates the ordered assembly of spliceosomal proteins and snRNAs. Required for the assembly of the U4/U6-U5 tri-snRNP complex, a building block of the spliceosome. Functions as a scaffold that positions spliceosomal U2, U5 and U6 snRNAs at splice sites on pre-mRNA substrates, so that splicing can occur. Interacts with both the 5' and the 3' splice site. The chain is Pre-mRNA-processing-splicing factor 8 (PRPF8) from Homo sapiens (Human).